The sequence spans 285 residues: Transcription factor JAMYB (285 aa).

HTH myb-type domains are found at residues 26–78 and 79–133; these read SAEL…LNYL and RPDV…QKHA. DNA-binding regions (H-T-H motif) lie at residues 54–78 and 106–129; these read WNALARAAGLKRTGKSCRLRWLNYL and WSKIAQHLPGRTDNEIKNYWRTRV.

The protein resides in the nucleus. Probable transcription factor that may be involved in the jasmonate-dependent defense responses to the rice blast fungus Magnaporthe oryzae. Does not seem to function in the salicylic acid-dependent signaling pathway. The protein is Transcription factor JAMYB of Oryza sativa subsp. japonica (Rice).